We begin with the raw amino-acid sequence, 379 residues long: Gonadotropin-releasing hormone II receptor (379 aa).

Residues 1 to 40 (MSAGNGTPWGSAVGEEAWAGSGVAVEGSELPTFSTAAKVR) lie on the Extracellular side of the membrane. The helical transmembrane segment at 41–60 (VGVTIVLFVSSAGGNLAVLW) threads the bilayer. Topologically, residues 61-76 (SVTRPQPSQLRPSPVR) are cytoplasmic. Residues 77–96 (TLFAHLAAADLLVTFVVMPL) traverse the membrane as a helical segment. Residues 97 to 114 (DATWNITVQWLAGDIACR) lie on the Extracellular side of the membrane. A glycan (N-linked (GlcNAc...) asparagine) is linked at Asn-101. Cys-113 and Cys-188 form a disulfide bridge. The helical transmembrane segment at 115–136 (TLMFLKLMAMYSAAFLPVVIGL) threads the bilayer. At 137–160 (DRQAAVLNPLGSRSGVRKLLGAAW) the chain is on the cytoplasmic side. The chain crosses the membrane as a helical span at residues 161–178 (GLSFLLALPQLFLFHTVH). Over 179–204 (RAGPVPFTQCVTKGSFKARWQETTYN) the chain is Extracellular. The chain crosses the membrane as a helical span at residues 205 to 224 (LFTFCCLFLLPLIAMAICYS). Over 225–278 (RIVLSVSSPQTRKGSHAPAGEFALRRSFDNRPRVCLRALRLALLILLTFILCWT) the chain is Cytoplasmic. The helical transmembrane segment at 279-297 (PYYLLGLWYWFSPTMLTEV) threads the bilayer. Residues 298–303 (PPSLSH) are Extracellular-facing. Residues 304–323 (ILFLFGLLNAPLDPLLYGAF) traverse the membrane as a helical segment. The Cytoplasmic segment spans residues 324–379 (TFGCRRGHQELSIDSSKEGSGRMLQQEIHALRQQEVQKTVTSRSAGETKGISITSI).

Belongs to the G-protein coupled receptor 1 family. Post-translationally, phosphorylated on the C-terminal cytoplasmic tail.

The protein localises to the cell membrane. Receptor for gonadotropin releasing hormone II (GnRH II). This receptor mediates its action by association with G proteins that activate a phosphatidylinositol-calcium second messenger system. This Chlorocebus aethiops (Green monkey) protein is Gonadotropin-releasing hormone II receptor (GNRHR2).